We begin with the raw amino-acid sequence, 357 residues long: MIRVLVVDDSAFMRKMISDFLTEEKQIEVIGTARNGEEALKKIELLKPDVITLDVEMPVMNGTDTLRKIIEIYNLPVIMVSSQTEKGKECTINCLEIGAFDFITKPSGSISLDLYKIKEQLVERVVAAGLSGKRKRPVSQTVRPEPIVRAVVKPELSKPKPGTGRQIVCIGTSTGGPRALQKVIPKLPKDLNAPVVVVQHMPEGFTASLADRLNHLSDIQVKEAKDGEAALNGCVYIAPGGKNISVIKNSEGLQVVLDNHDTPSRHKPSADYLFRSVGKLTDYEKVAVIMTGMGSDGTAGLKDMLTAGNVKAIAESEESCVVYGMPKAAVKAGLIHEIKHVEDIAASITSCVKKERV.

One can recognise a Response regulatory domain in the interval 3–120; sequence RVLVVDDSAF…SLDLYKIKEQ (118 aa). 4-aspartylphosphate is present on aspartate 54. One can recognise a CheB-type methylesterase domain in the interval 161 to 355; sequence PGTGRQIVCI…ASITSCVKKE (195 aa). Catalysis depends on residues serine 173, histidine 200, and aspartate 296.

The protein belongs to the CheB family. Post-translationally, phosphorylated by CheA. Phosphorylation of the N-terminal regulatory domain activates the methylesterase activity.

The protein resides in the cytoplasm. It catalyses the reaction [protein]-L-glutamate 5-O-methyl ester + H2O = L-glutamyl-[protein] + methanol + H(+). The enzyme catalyses L-glutaminyl-[protein] + H2O = L-glutamyl-[protein] + NH4(+). Its function is as follows. Involved in the modulation of the chemotaxis system; catalyzes the demethylation of specific methylglutamate residues introduced into the chemoreceptors (methyl-accepting chemotaxis proteins) by CheR. B.subtilis has an effective methylation-independent adaptation system but must utilize the methylation system for adaptation to high concentrations of attractant. This chain is Protein-glutamate methylesterase/protein-glutamine glutaminase, found in Bacillus subtilis (strain 168).